The following is a 544-amino-acid chain: uncharacterized protein (544 aa).

Transmembrane regions (helical) follow at residues 41 to 61 (FSAW…PSFA), 71 to 91 (AGTP…QCVA), 106 to 126 (GLYY…AAWL), 166 to 186 (YQIF…SSMP), 196 to 216 (WGTV…LAVA), 240 to 260 (WSNG…MSGY), 280 to 300 (AIVM…LCIA), 332 to 352 (VALT…CMVA), 391 to 411 (VVGI…NAIF), 413 to 433 (VGAI…VFFV), 451 to 471 (INGY…CFPQ), and 484 to 504 (WTCV…FVSA).

The protein belongs to the amino acid-polyamine-organocation (APC) superfamily.

Its subcellular location is the membrane. This is an uncharacterized protein from Schizosaccharomyces pombe (strain 972 / ATCC 24843) (Fission yeast).